The chain runs to 122 residues: Acidic phospholipase A2 (122 aa).

Intrachain disulfides connect C26–C115, C28–C44, C43–C95, C49–C122, C50–C88, C57–C81, and C75–C86. Y27, G29, and G31 together coordinate Ca(2+). H47 is a catalytic residue. D48 provides a ligand contact to Ca(2+). D89 is a catalytic residue.

This sequence belongs to the phospholipase A2 family. Group II subfamily. D49 sub-subfamily. In terms of assembly, monomer. Ca(2+) serves as cofactor. In terms of tissue distribution, expressed by the venom gland.

The protein localises to the secreted. The enzyme catalyses a 1,2-diacyl-sn-glycero-3-phosphocholine + H2O = a 1-acyl-sn-glycero-3-phosphocholine + a fatty acid + H(+). In terms of biological role, PLA2 catalyzes the calcium-dependent hydrolysis of the 2-acyl groups in 3-sn-phosphoglycerides. This chain is Acidic phospholipase A2, found in Gloydius blomhoffii (Mamushi).